Reading from the N-terminus, the 163-residue chain is Cyanate hydratase (163 aa).

Active-site residues include arginine 103, glutamate 106, and serine 129.

The protein belongs to the cyanase family.

The catalysed reaction is cyanate + hydrogencarbonate + 3 H(+) = NH4(+) + 2 CO2. Functionally, catalyzes the reaction of cyanate with bicarbonate to produce ammonia and carbon dioxide. The protein is Cyanate hydratase of Paracoccidioides lutzii (strain ATCC MYA-826 / Pb01) (Paracoccidioides brasiliensis).